Reading from the N-terminus, the 675-residue chain is Potassium-transporting ATPase ATP-binding subunit 2 (675 aa).

4 helical membrane-spanning segments follow: residues 34 to 54 (IMFV…FPDI), 65 to 85 (LITI…SEAF), 216 to 236 (IALF…IVTL), and 245 to 265 (LILP…TTIG). The active-site 4-aspartylphosphate intermediate is the Asp304. ATP contacts are provided by residues Asp341, Glu345, 372 to 379 (FTAETRMS), and Lys390. 2 residues coordinate Mg(2+): Asp513 and Asp517. Transmembrane regions (helical) follow at residues 569 to 591 (ALTT…ALMM), 611 to 631 (AIIS…PIAM), and 644 to 664 (IFIN…FLGI).

It belongs to the cation transport ATPase (P-type) (TC 3.A.3) family. Type IA subfamily. As to quaternary structure, the system is composed of three essential subunits: KdpA, KdpB and KdpC.

Its subcellular location is the cell membrane. It catalyses the reaction K(+)(out) + ATP + H2O = K(+)(in) + ADP + phosphate + H(+). Functionally, part of the high-affinity ATP-driven potassium transport (or Kdp) system, which catalyzes the hydrolysis of ATP coupled with the electrogenic transport of potassium into the cytoplasm. This subunit is responsible for energy coupling to the transport system and for the release of the potassium ions to the cytoplasm. The protein is Potassium-transporting ATPase ATP-binding subunit 2 of Staphylococcus aureus (strain MRSA252).